The primary structure comprises 221 residues: Casparian strip membrane protein 3 (221 aa).

A compositionally biased stretch (basic and acidic residues) spans 1-12 (MDIEKAASRREE). The interval 1-28 (MDIEKAASRREEEEPIVQRPKLDKGKGK) is disordered. At 1–58 (MDIEKAASRREEEEPIVQRPKLDKGKGKAHVFAPPMNYNRIMDKHKQEKVSAAGWKRG) the chain is on the cytoplasmic side. A helical membrane pass occupies residues 59 to 79 (VAIFDFVLRLIAAITAMAAAA). At 80 to 109 (KMATTEETLPFFTQFLQFQAEYTDLPTMSS) the chain is on the extracellular side. The chain crosses the membrane as a helical span at residues 110-130 (FVIVNSIVGGYLTLSLPFSIV). The Cytoplasmic portion of the chain corresponds to 131–148 (CILRPLAVPPRLFLIICD). A helical transmembrane segment spans residues 149–169 (TAMMGLTMMAASASAAIVYLA). At 170 to 194 (HNGNSSSNWLPVCQQFGDFCQGTSG) the chain is on the extracellular side. Asn173 is a glycosylation site (N-linked (GlcNAc...) asparagine). The helical transmembrane segment at 195 to 215 (AVVASFIAATLLMFLVILSAF) threads the bilayer. Residues 216–221 (ALKRST) lie on the Cytoplasmic side of the membrane.

Belongs to the Casparian strip membrane proteins (CASP) family. In terms of assembly, homodimer and heterodimers.

The protein localises to the cell membrane. Its function is as follows. Regulates membrane-cell wall junctions and localized cell wall deposition. Required for establishment of the Casparian strip membrane domain (CSD) and the subsequent formation of Casparian strips, a cell wall modification of the root endodermis that determines an apoplastic barrier between the intraorganismal apoplasm and the extraorganismal apoplasm and prevents lateral diffusion. This is Casparian strip membrane protein 3 from Arabidopsis lyrata subsp. lyrata (Lyre-leaved rock-cress).